Reading from the N-terminus, the 240-residue chain is Glutathione S-transferase theta-1 (240 aa).

Positions 2–82 (GLELYLDLLS…YLARKYKVPD (81 aa)) constitute a GST N-terminal domain. Glutathione is bound by residues His40, 53-54 (KV), and 66-67 (ES). A GST C-terminal domain is found at 88-226 (DLQACARVDE…AKDSQPADPT (139 aa)).

The protein belongs to the GST superfamily. Theta family. In terms of assembly, homodimer.

It is found in the cytoplasm. The catalysed reaction is RX + glutathione = an S-substituted glutathione + a halide anion + H(+). Functionally, conjugation of reduced glutathione to a wide number of exogenous and endogenous hydrophobic electrophiles. Also binds steroids, bilirubin, carcinogens and numerous organic anions. Has dichloromethane dehalogenase activity. This is Glutathione S-transferase theta-1 (GSTT1) from Bos taurus (Bovine).